The primary structure comprises 274 residues: 3-methyl-2-oxobutanoate hydroxymethyltransferase (274 aa).

The Mg(2+) site is built by aspartate 46 and aspartate 85. Residues 46 to 47 (DS), aspartate 85, and lysine 115 contribute to the 3-methyl-2-oxobutanoate site. Glutamate 117 contributes to the Mg(2+) binding site. The active-site Proton acceptor is glutamate 184.

The protein belongs to the PanB family. As to quaternary structure, homodecamer; pentamer of dimers. It depends on Mg(2+) as a cofactor.

It is found in the cytoplasm. It catalyses the reaction 3-methyl-2-oxobutanoate + (6R)-5,10-methylene-5,6,7,8-tetrahydrofolate + H2O = 2-dehydropantoate + (6S)-5,6,7,8-tetrahydrofolate. Its pathway is cofactor biosynthesis; coenzyme A biosynthesis. In terms of biological role, catalyzes the reversible reaction in which hydroxymethyl group from 5,10-methylenetetrahydrofolate is transferred onto alpha-ketoisovalerate to form ketopantoate. This Halobacterium salinarum (strain ATCC 29341 / DSM 671 / R1) protein is 3-methyl-2-oxobutanoate hydroxymethyltransferase.